Consider the following 181-residue polypeptide: Acireductone dioxygenase (181 aa).

Positions 97, 99, 103, and 141 each coordinate Fe(2+). Histidine 97, histidine 99, glutamate 103, and histidine 141 together coordinate Ni(2+).

Belongs to the acireductone dioxygenase (ARD) family. In terms of assembly, monomer. It depends on Fe(2+) as a cofactor. Ni(2+) is required as a cofactor.

The catalysed reaction is 1,2-dihydroxy-5-(methylsulfanyl)pent-1-en-3-one + O2 = 3-(methylsulfanyl)propanoate + CO + formate + 2 H(+). It catalyses the reaction 1,2-dihydroxy-5-(methylsulfanyl)pent-1-en-3-one + O2 = 4-methylsulfanyl-2-oxobutanoate + formate + 2 H(+). Its pathway is amino-acid biosynthesis; L-methionine biosynthesis via salvage pathway; L-methionine from S-methyl-5-thio-alpha-D-ribose 1-phosphate: step 5/6. Functionally, catalyzes 2 different reactions between oxygen and the acireductone 1,2-dihydroxy-3-keto-5-methylthiopentene (DHK-MTPene) depending upon the metal bound in the active site. Fe-containing acireductone dioxygenase (Fe-ARD) produces formate and 2-keto-4-methylthiobutyrate (KMTB), the alpha-ketoacid precursor of methionine in the methionine recycle pathway. Ni-containing acireductone dioxygenase (Ni-ARD) produces methylthiopropionate, carbon monoxide and formate, and does not lie on the methionine recycle pathway. The polypeptide is Acireductone dioxygenase (Pseudomonas fluorescens (strain Pf0-1)).